A 417-amino-acid chain; its full sequence is UDP-N-acetylglucosamine 1-carboxyvinyltransferase (417 aa).

22-23 (KN) provides a ligand contact to phosphoenolpyruvate. Residue R94 participates in UDP-N-acetyl-alpha-D-glucosamine binding. C118 (proton donor) is an active-site residue. C118 bears the 2-(S-cysteinyl)pyruvic acid O-phosphothioketal mark. UDP-N-acetyl-alpha-D-glucosamine-binding positions include 123–127 (RPIDQ), D306, and I328.

It belongs to the EPSP synthase family. MurA subfamily.

It is found in the cytoplasm. It carries out the reaction phosphoenolpyruvate + UDP-N-acetyl-alpha-D-glucosamine = UDP-N-acetyl-3-O-(1-carboxyvinyl)-alpha-D-glucosamine + phosphate. It participates in cell wall biogenesis; peptidoglycan biosynthesis. Functionally, cell wall formation. Adds enolpyruvyl to UDP-N-acetylglucosamine. The sequence is that of UDP-N-acetylglucosamine 1-carboxyvinyltransferase from Clostridium botulinum (strain ATCC 19397 / Type A).